The following is a 492-amino-acid chain: Probable cytosol aminopeptidase (492 aa).

Positions 262 and 267 each coordinate Mn(2+). Lys-274 is a catalytic residue. 3 residues coordinate Mn(2+): Asp-286, Asp-345, and Glu-347. The active site involves Arg-349.

The protein belongs to the peptidase M17 family. Mn(2+) serves as cofactor.

The protein resides in the cytoplasm. It catalyses the reaction Release of an N-terminal amino acid, Xaa-|-Yaa-, in which Xaa is preferably Leu, but may be other amino acids including Pro although not Arg or Lys, and Yaa may be Pro. Amino acid amides and methyl esters are also readily hydrolyzed, but rates on arylamides are exceedingly low.. It carries out the reaction Release of an N-terminal amino acid, preferentially leucine, but not glutamic or aspartic acids.. Its function is as follows. Presumably involved in the processing and regular turnover of intracellular proteins. Catalyzes the removal of unsubstituted N-terminal amino acids from various peptides. In Acaryochloris marina (strain MBIC 11017), this protein is Probable cytosol aminopeptidase.